Consider the following 305-residue polypeptide: N-acetyl-D-glucosamine kinase (305 aa).

ATP contacts are provided by residues 4–11 (GFDIGGTK) and 133–140 (GFGGGLVF). Zn(2+) contacts are provided by H157, C178, C180, and C185.

This sequence belongs to the ROK (NagC/XylR) family. NagK subfamily.

It catalyses the reaction N-acetyl-D-glucosamine + ATP = N-acetyl-D-glucosamine 6-phosphate + ADP + H(+). It functions in the pathway cell wall biogenesis; peptidoglycan recycling. In terms of biological role, catalyzes the phosphorylation of N-acetyl-D-glucosamine (GlcNAc) derived from cell-wall degradation, yielding GlcNAc-6-P. The chain is N-acetyl-D-glucosamine kinase from Histophilus somni (strain 129Pt) (Haemophilus somnus).